Reading from the N-terminus, the 129-residue chain is uncharacterized protein (129 aa).

This is an uncharacterized protein from Invertebrate iridescent virus 6 (IIV-6).